Consider the following 134-residue polypeptide: DNA-binding protein H-NS homolog (134 aa).

Residues 106 to 134 (HKTWTGQGRTPRPIQNALNKGKSLSDFEI) form a disordered region. Residues 112–117 (QGRTPR) mediate DNA binding.

Belongs to the histone-like protein H-NS family. In terms of assembly, homodimer that oligomerizes on DNA into higher-order complexes that form bridges between disparate regions of DNA compacting it.

The protein resides in the cytoplasm. It is found in the nucleoid. Functionally, a DNA-binding protein implicated in transcriptional repression and chromosome organization and compaction. Binds nucleation sites in AT-rich DNA and bridges them, forming higher-order nucleoprotein complexes and condensing the chromosome. As many horizontally transferred genes are AT-rich, it plays a central role in silencing foreign genes. A subset of genes are repressed by H-NS in association with other proteins. The sequence is that of DNA-binding protein H-NS homolog (hns) from Haemophilus influenzae (strain ATCC 51907 / DSM 11121 / KW20 / Rd).